Here is a 643-residue protein sequence, read N- to C-terminus: Phosphomethylpyrimidine synthase (643 aa).

Residues N248, M277, Y306, H342, 362–364, 403–406, and E442 contribute to the substrate site; these read SRG and DGLR. H446 lines the Zn(2+) pocket. Y469 is a substrate binding site. H510 contributes to the Zn(2+) binding site. The [4Fe-4S] cluster site is built by C590, C593, and C598.

This sequence belongs to the ThiC family. In terms of assembly, homodimer. Requires [4Fe-4S] cluster as cofactor.

It carries out the reaction 5-amino-1-(5-phospho-beta-D-ribosyl)imidazole + S-adenosyl-L-methionine = 4-amino-2-methyl-5-(phosphooxymethyl)pyrimidine + CO + 5'-deoxyadenosine + formate + L-methionine + 3 H(+). It functions in the pathway cofactor biosynthesis; thiamine diphosphate biosynthesis. Its function is as follows. Catalyzes the synthesis of the hydroxymethylpyrimidine phosphate (HMP-P) moiety of thiamine from aminoimidazole ribotide (AIR) in a radical S-adenosyl-L-methionine (SAM)-dependent reaction. In Burkholderia cenocepacia (strain ATCC BAA-245 / DSM 16553 / LMG 16656 / NCTC 13227 / J2315 / CF5610) (Burkholderia cepacia (strain J2315)), this protein is Phosphomethylpyrimidine synthase.